Here is a 151-residue protein sequence, read N- to C-terminus: Protein SprT-like (151 aa).

One can recognise a SprT-like domain in the interval 7-146; that stretch reads QSLTESIAIK…CGRCGGILKL (140 aa). H67 contributes to the Zn(2+) binding site. Residue E68 is part of the active site. Residue H71 participates in Zn(2+) binding.

The protein belongs to the SprT family. The cofactor is Zn(2+).

The protein resides in the cytoplasm. The polypeptide is Protein SprT-like (Staphylococcus epidermidis (strain ATCC 35984 / DSM 28319 / BCRC 17069 / CCUG 31568 / BM 3577 / RP62A)).